We begin with the raw amino-acid sequence, 39 residues long: Potassium channel toxin alpha-KTx 2.8 (39 aa).

Disulfide bonds link cysteine 7-cysteine 29, cysteine 13-cysteine 34, and cysteine 17-cysteine 36.

This sequence belongs to the short scorpion toxin superfamily. Potassium channel inhibitor family. Alpha-KTx 02 subfamily. Expressed by the venom gland.

The protein localises to the secreted. Its function is as follows. Blocks Kv1.3/KCNA3 voltage-gated potassium channels of human T-lymphocytes (Kd=0.71 nM). The polypeptide is Potassium channel toxin alpha-KTx 2.8 (Centruroides elegans (Bark scorpion)).